We begin with the raw amino-acid sequence, 184 residues long: GTP cyclohydrolase 1 (184 aa).

Zn(2+) is bound by residues Cys-75, His-78, and Cys-146.

The protein belongs to the GTP cyclohydrolase I family. In terms of assembly, homomer.

The enzyme catalyses GTP + H2O = 7,8-dihydroneopterin 3'-triphosphate + formate + H(+). It functions in the pathway cofactor biosynthesis; 7,8-dihydroneopterin triphosphate biosynthesis; 7,8-dihydroneopterin triphosphate from GTP: step 1/1. This chain is GTP cyclohydrolase 1, found in Streptococcus pneumoniae (strain Taiwan19F-14).